The primary structure comprises 385 residues: 1-deoxy-D-xylulose 5-phosphate reductoisomerase (385 aa).

NADPH is bound by residues threonine 10, glycine 11, serine 12, isoleucine 13, lysine 37, and asparagine 124. Lysine 125 serves as a coordination point for 1-deoxy-D-xylulose 5-phosphate. Residue glutamate 126 participates in NADPH binding. Position 150 (aspartate 150) interacts with Mn(2+). Residues serine 151, glutamate 152, serine 176, and histidine 199 each contribute to the 1-deoxy-D-xylulose 5-phosphate site. Position 152 (glutamate 152) interacts with Mn(2+). Residue glycine 205 participates in NADPH binding. Positions 212, 217, 218, and 221 each coordinate 1-deoxy-D-xylulose 5-phosphate. Glutamate 221 is a Mn(2+) binding site.

Belongs to the DXR family. Mg(2+) is required as a cofactor. It depends on Mn(2+) as a cofactor.

It catalyses the reaction 2-C-methyl-D-erythritol 4-phosphate + NADP(+) = 1-deoxy-D-xylulose 5-phosphate + NADPH + H(+). Its pathway is isoprenoid biosynthesis; isopentenyl diphosphate biosynthesis via DXP pathway; isopentenyl diphosphate from 1-deoxy-D-xylulose 5-phosphate: step 1/6. Its function is as follows. Catalyzes the NADPH-dependent rearrangement and reduction of 1-deoxy-D-xylulose-5-phosphate (DXP) to 2-C-methyl-D-erythritol 4-phosphate (MEP). The protein is 1-deoxy-D-xylulose 5-phosphate reductoisomerase of Clostridium botulinum (strain Kyoto / Type A2).